The sequence spans 466 residues: Soluble pyridine nucleotide transhydrogenase (466 aa).

36–45 (ERYHNIGGGC) contacts FAD.

Belongs to the class-I pyridine nucleotide-disulfide oxidoreductase family. FAD is required as a cofactor.

The protein resides in the cytoplasm. The catalysed reaction is NAD(+) + NADPH = NADH + NADP(+). In terms of biological role, conversion of NADPH, generated by peripheral catabolic pathways, to NADH, which can enter the respiratory chain for energy generation. In Erwinia tasmaniensis (strain DSM 17950 / CFBP 7177 / CIP 109463 / NCPPB 4357 / Et1/99), this protein is Soluble pyridine nucleotide transhydrogenase.